A 252-amino-acid polypeptide reads, in one-letter code: UPF0246 protein FP0718 (252 aa).

This sequence belongs to the UPF0246 family.

The chain is UPF0246 protein FP0718 from Flavobacterium psychrophilum (strain ATCC 49511 / DSM 21280 / CIP 103535 / JIP02/86).